The chain runs to 317 residues: Aspartate carbamoyltransferase catalytic subunit (317 aa).

Carbamoyl phosphate contacts are provided by Arg-66 and Thr-67. Lys-94 serves as a coordination point for L-aspartate. Positions 116, 144, and 147 each coordinate carbamoyl phosphate. Residues Arg-177 and Arg-231 each contribute to the L-aspartate site. Carbamoyl phosphate-binding residues include Gly-272 and Pro-273.

Belongs to the aspartate/ornithine carbamoyltransferase superfamily. ATCase family. Heterododecamer (2C3:3R2) of six catalytic PyrB chains organized as two trimers (C3), and six regulatory PyrI chains organized as three dimers (R2).

It carries out the reaction carbamoyl phosphate + L-aspartate = N-carbamoyl-L-aspartate + phosphate + H(+). The protein operates within pyrimidine metabolism; UMP biosynthesis via de novo pathway; (S)-dihydroorotate from bicarbonate: step 2/3. Catalyzes the condensation of carbamoyl phosphate and aspartate to form carbamoyl aspartate and inorganic phosphate, the committed step in the de novo pyrimidine nucleotide biosynthesis pathway. In Beijerinckia indica subsp. indica (strain ATCC 9039 / DSM 1715 / NCIMB 8712), this protein is Aspartate carbamoyltransferase catalytic subunit.